A 159-amino-acid chain; its full sequence is 2-C-methyl-D-erythritol 2,4-cyclodiphosphate synthase (159 aa).

D10 and H12 together coordinate a divalent metal cation. 4-CDP-2-C-methyl-D-erythritol 2-phosphate is bound by residues D10–H12 and H37–S38. H45 contacts a divalent metal cation. Residues D59–G61, F64–D68, A103–L109, T135–E138, F142, and R145 contribute to the 4-CDP-2-C-methyl-D-erythritol 2-phosphate site.

This sequence belongs to the IspF family. In terms of assembly, homotrimer. A divalent metal cation is required as a cofactor.

It carries out the reaction 4-CDP-2-C-methyl-D-erythritol 2-phosphate = 2-C-methyl-D-erythritol 2,4-cyclic diphosphate + CMP. Its pathway is isoprenoid biosynthesis; isopentenyl diphosphate biosynthesis via DXP pathway; isopentenyl diphosphate from 1-deoxy-D-xylulose 5-phosphate: step 4/6. Functionally, involved in the biosynthesis of isopentenyl diphosphate (IPP) and dimethylallyl diphosphate (DMAPP), two major building blocks of isoprenoid compounds. Catalyzes the conversion of 4-diphosphocytidyl-2-C-methyl-D-erythritol 2-phosphate (CDP-ME2P) to 2-C-methyl-D-erythritol 2,4-cyclodiphosphate (ME-CPP) with a corresponding release of cytidine 5-monophosphate (CMP). The sequence is that of 2-C-methyl-D-erythritol 2,4-cyclodiphosphate synthase from Francisella tularensis subsp. novicida (strain U112).